A 370-amino-acid polypeptide reads, in one-letter code: Serine/threonine-protein kinase RIM11/MSD1 (370 aa).

The Protein kinase domain occupies 39 to 322; the sequence is FPTTEVVGHG…ALQCLCSPYF (284 aa). ATP-binding positions include 45–53 and lysine 68; that span reads VGHGSFGVV. Residue aspartate 164 is the Proton acceptor of the active site. Tyrosine 199 carries the phosphotyrosine modification.

This sequence belongs to the protein kinase superfamily. CMGC Ser/Thr protein kinase family. GSK-3 subfamily. Interacts with TDA1.

The enzyme catalyses L-seryl-[protein] + ATP = O-phospho-L-seryl-[protein] + ADP + H(+). It catalyses the reaction L-threonyl-[protein] + ATP = O-phospho-L-threonyl-[protein] + ADP + H(+). Its function is as follows. Serine/threonine protein kinase that is thought to function in regulating kinetochore activity and entry into meiosis. Could phosphorylate IME1. This chain is Serine/threonine-protein kinase RIM11/MSD1 (RIM11), found in Saccharomyces cerevisiae (strain ATCC 204508 / S288c) (Baker's yeast).